Consider the following 294-residue polypeptide: Cell division control protein 2 homolog 2 (294 aa).

The region spanning tyrosine 4–phenylalanine 287 is the Protein kinase domain. ATP contacts are provided by residues isoleucine 10–valine 18 and lysine 33. Threonine 14 bears the Phosphothreonine mark. At tyrosine 15 the chain carries Phosphotyrosine. Aspartate 127 acts as the Proton acceptor in catalysis. Threonine 161 is modified (phosphothreonine; by CAK).

The protein belongs to the protein kinase superfamily. CMGC Ser/Thr protein kinase family. CDC2/CDKX subfamily. As to expression, found in most organs including root, young leaf, stem, vegetative meristem and flower bud.

It carries out the reaction L-seryl-[protein] + ATP = O-phospho-L-seryl-[protein] + ADP + H(+). It catalyses the reaction L-threonyl-[protein] + ATP = O-phospho-L-threonyl-[protein] + ADP + H(+). Its activity is regulated as follows. Phosphorylation at Thr-14 or Tyr-15 inactivates the enzyme, while phosphorylation at Thr-161 activates it. Functionally, plays a key role in the control of the eukaryotic cell cycle. Component of the kinase complex that phosphorylates the repetitive C-terminus of RNA polymerase II. This chain is Cell division control protein 2 homolog 2 (CDC2B), found in Medicago sativa (Alfalfa).